A 142-amino-acid polypeptide reads, in one-letter code: Snaclec 2 (142 aa).

The N-terminal stretch at 1-23 (MGRFIFVSFSLLVVFLSLSGTGA) is a signal peptide. Cysteines 25 and 36 form a disulfide. The region spanning 32-139 (YEGHCYRVFQ…CSETHNVICK (108 aa)) is the C-type lectin domain. N-linked (GlcNAc...) asparagine glycosylation is present at Asn43. Disulfide bonds link Cys53/Cys138 and Cys115/Cys130.

The protein belongs to the snaclec family. As to quaternary structure, heterodimer; disulfide-linked. As to expression, expressed by the venom gland.

Its subcellular location is the secreted. Interferes with one step of hemostasis (modulation of platelet aggregation, or coagulation cascade, for example). This is Snaclec 2 from Sistrurus catenatus edwardsii (Desert massasauga).